Here is a 328-residue protein sequence, read N- to C-terminus: GMP reductase (328 aa).

The Thioimidate intermediate role is filled by cysteine 176. NADP(+) is bound at residue 205 to 228 (IIADGGIRTHGDIAKSIRFGASMI).

This sequence belongs to the IMPDH/GMPR family. GuaC type 2 subfamily.

It carries out the reaction IMP + NH4(+) + NADP(+) = GMP + NADPH + 2 H(+). In terms of biological role, catalyzes the irreversible NADPH-dependent deamination of GMP to IMP. It functions in the conversion of nucleobase, nucleoside and nucleotide derivatives of G to A nucleotides, and in maintaining the intracellular balance of A and G nucleotides. The polypeptide is GMP reductase (Streptococcus pneumoniae (strain ATCC 700669 / Spain 23F-1)).